We begin with the raw amino-acid sequence, 351 residues long: Phenylalanine--tRNA ligase alpha subunit (351 aa).

Glu-266 serves as a coordination point for Mg(2+).

It belongs to the class-II aminoacyl-tRNA synthetase family. Phe-tRNA synthetase alpha subunit type 1 subfamily. As to quaternary structure, tetramer of two alpha and two beta subunits. The cofactor is Mg(2+).

The protein resides in the cytoplasm. The catalysed reaction is tRNA(Phe) + L-phenylalanine + ATP = L-phenylalanyl-tRNA(Phe) + AMP + diphosphate + H(+). This is Phenylalanine--tRNA ligase alpha subunit from Anaplasma marginale (strain St. Maries).